The following is an 85-amino-acid chain: Acyl carrier protein (85 aa).

A Carrier domain is found at 4–79 (DELFEKVKEI…NAVNLLSEKL (76 aa)). Serine 39 is subject to O-(pantetheine 4'-phosphoryl)serine.

It belongs to the acyl carrier protein (ACP) family. 4'-phosphopantetheine is transferred from CoA to a specific serine of apo-ACP by AcpS. This modification is essential for activity because fatty acids are bound in thioester linkage to the sulfhydryl of the prosthetic group.

The protein localises to the cytoplasm. The protein operates within lipid metabolism; fatty acid biosynthesis. Functionally, carrier of the growing fatty acid chain in fatty acid biosynthesis. In Petrotoga mobilis (strain DSM 10674 / SJ95), this protein is Acyl carrier protein.